Reading from the N-terminus, the 234-residue chain is Purine nucleoside phosphorylase DeoD-type (234 aa).

H4 contributes to the a purine D-ribonucleoside binding site. Residues G20, R24, R43, and 87–90 (RIGT) contribute to the phosphate site. A purine D-ribonucleoside-binding positions include 179 to 181 (EME) and 203 to 204 (SD). D204 functions as the Proton donor in the catalytic mechanism.

It belongs to the PNP/UDP phosphorylase family. In terms of assembly, homohexamer; trimer of homodimers.

The enzyme catalyses a purine D-ribonucleoside + phosphate = a purine nucleobase + alpha-D-ribose 1-phosphate. The catalysed reaction is a purine 2'-deoxy-D-ribonucleoside + phosphate = a purine nucleobase + 2-deoxy-alpha-D-ribose 1-phosphate. In terms of biological role, catalyzes the reversible phosphorolytic breakdown of the N-glycosidic bond in the beta-(deoxy)ribonucleoside molecules, with the formation of the corresponding free purine bases and pentose-1-phosphate. The sequence is that of Purine nucleoside phosphorylase DeoD-type from Helicobacter pylori (strain Shi470).